Here is a 101-residue protein sequence, read N- to C-terminus: Small ribosomal subunit protein uS14 (101 aa).

Belongs to the universal ribosomal protein uS14 family. In terms of assembly, part of the 30S ribosomal subunit. Contacts proteins S3 and S10.

Functionally, binds 16S rRNA, required for the assembly of 30S particles and may also be responsible for determining the conformation of the 16S rRNA at the A site. The sequence is that of Small ribosomal subunit protein uS14 from Francisella tularensis subsp. holarctica (strain FTNF002-00 / FTA).